Consider the following 476-residue polypeptide: MTASKSTETLPGDNTNTWSGRFDEPVSELVQRYTASVGFDKRLAEYDIQGSLAHARMLAAGGIIGPHDLDAIERGLSQIRQEIQGGGFVWQLALEDVHLNIEKRLTALIGDAGKRLHTARSRNDQVATDIRLYLRASIDRITALIHAMQKALLHLAEQHVDTVMPGFTHLQVAQPIVFGHHLIAYFEMLKRDVERLADCRKRVNKLPLGAAALAGTSYSVDRAMVAQELGFEGVCENSLDAVSDRDFAIEFCAAAALIMTHLSRLSEELILWMSPPFGFIDLADRFCTGSSIMPQKKNPDVPELVRGKTGRVNGHLVALLTLMKAQPLAYNKDNQEDKEPLFDTVDTLTDTLRIYADMMAGIRVKETAMREAAKRGYATATDLADYLTKKGLPFREAHEAVAQAVRFAEKNNRDLSALTLPELQQFSPLIEDDIFTVLTLEGSLNSRNHIGGTAPVQVAAAIRRAREWLSATPAAQ.

The protein belongs to the lyase 1 family. Argininosuccinate lyase subfamily.

Its subcellular location is the cytoplasm. It catalyses the reaction 2-(N(omega)-L-arginino)succinate = fumarate + L-arginine. It participates in amino-acid biosynthesis; L-arginine biosynthesis; L-arginine from L-ornithine and carbamoyl phosphate: step 3/3. The sequence is that of Argininosuccinate lyase from Nitrosospira multiformis (strain ATCC 25196 / NCIMB 11849 / C 71).